The following is a 480-amino-acid chain: CASP8 and FADD-like apoptosis regulator (480 aa).

2 DED domains span residues 1-73 and 92-170; these read MSAE…RILK and DYRV…KIQK. The interaction with CASP8 stretch occupies residues 1–195; that stretch reads MSAEVIHQVE…LQAAIQKSLK (195 aa). The tract at residues 1-227 is interaction with FADD; the sequence is MSAEVIHQVE…GAQQEPVKKS (227 aa). Residues 1–305 form an interaction with CASP8 propeptide region; sequence MSAEVIHQVE…FACMPEHRDY (305 aa). Residues 1–435 are not proteolytically processed and involved in apoptosis inhibition; the sequence is MSAEVIHQVE…CLSQKLRQER (435 aa). An interaction with CASP3 region spans residues 192-435; it reads KSLKDPSNNF…CLSQKLRQER (244 aa). The interval 192–480 is interaction with TRAF1 and TRAF2; it reads KSLKDPSNNF…LRKKLILSYT (289 aa). The tract at residues 217–480 is interaction with CASP8 subunits p18 and p10; sequence LGAQQEPVKK…LRKKLILSYT (264 aa). Positions 263–358 are caspase; that stretch reads ETELLRDTFT…AGKPKMFFIQ (96 aa). The interaction with CASP8 stretch occupies residues 370–480; that stretch reads SSLLEVDGPA…LRKKLILSYT (111 aa).

Belongs to the peptidase C14A family. TNFRSF6 stimulation triggers recruitment to the death-inducing signaling complex (DISC) formed by TNFRSF6, FADD and CASP8. A proteolytic fragment (p43) stays associated with the DISC. Also interacts with FADD, CASP8, CASP3, TRAF1, TRAF2 and Bcl-X(L) (in vitro). Interacts with RIPK1. As to quaternary structure, (Microbial infection) Interacts with HBV protein X. Proteolytically processed by CASP8 generating subunit p43 and p12. Widely expressed. Higher expression in skeletal muscle, pancreas, heart, kidney, placenta, and peripheral blood leukocytes. Also detected in diverse cell lines. Isoform 8 is predominantly expressed in testis and skeletal muscle.

Its function is as follows. Apoptosis regulator protein which may function as a crucial link between cell survival and cell death pathways in mammalian cells. Acts as an inhibitor of TNFRSF6 mediated apoptosis. A proteolytic fragment (p43) is likely retained in the death-inducing signaling complex (DISC) thereby blocking further recruitment and processing of caspase-8 at the complex. Full length and shorter isoforms have been shown either to induce apoptosis or to reduce TNFRSF-triggered apoptosis. Lacks enzymatic (caspase) activity. The protein is CASP8 and FADD-like apoptosis regulator (CFLAR) of Homo sapiens (Human).